Reading from the N-terminus, the 101-residue chain is Small ribosomal subunit protein uS14A (101 aa).

A disordered region spans residues 31 to 73; it reads IKSPSTTPEARVAAQSELNRQPRDASPVRVRNRDSVDGRPRGH. The segment covering 61–70 has biased composition (basic and acidic residues); it reads RNRDSVDGRP.

The protein belongs to the universal ribosomal protein uS14 family. As to quaternary structure, part of the 30S ribosomal subunit. Contacts proteins S3 and S10.

Binds 16S rRNA, required for the assembly of 30S particles and may also be responsible for determining the conformation of the 16S rRNA at the A site. This Mycolicibacterium vanbaalenii (strain DSM 7251 / JCM 13017 / BCRC 16820 / KCTC 9966 / NRRL B-24157 / PYR-1) (Mycobacterium vanbaalenii) protein is Small ribosomal subunit protein uS14A.